A 277-amino-acid polypeptide reads, in one-letter code: MKKTLIALAVAASAAVSGSVMAADWTEGQPGDIIIGGEITSPSVKWLWKTGEGLSSFSNTTNEIVKRKLNISVPTDELFLAAKMSDGIKGVFVGNTLIPKIEMASYDGSVITPSFTSNTAMDIAVKVKNSGDNTELGTLSVPLSFGAAVATIFDGDTTDSAVAHIIGGSAGTVFEGLVNPGRFTDQNIAYKWNGLSKAEMAGYVEKLMPGQSASTSYSGFHNWDDLSHSNYTSANKASYLSYGSGVSAGSTLVMNLNKDVAGRLEWVAPVTITVIYS.

The signal sequence occupies residues 1-22; it reads MKKTLIALAVAASAAVSGSVMA.

This sequence belongs to the fimbrial K88 protein family.

The protein resides in the fimbrium. Its function is as follows. Fimbriae (also called pili), polar filaments radiating from the surface of the bacterium to a length of 0.5-1.5 micrometers and numbering 100-300 per cell, enable bacteria to colonize the epithelium of specific host organs. The chain is F41 fimbrial protein (FimF41a) from Escherichia coli.